The chain runs to 877 residues: Alanine--tRNA ligase (877 aa).

Positions 567, 571, 669, and 673 each coordinate Zn(2+).

It belongs to the class-II aminoacyl-tRNA synthetase family. Zn(2+) is required as a cofactor.

Its subcellular location is the cytoplasm. The enzyme catalyses tRNA(Ala) + L-alanine + ATP = L-alanyl-tRNA(Ala) + AMP + diphosphate. Its function is as follows. Catalyzes the attachment of alanine to tRNA(Ala) in a two-step reaction: alanine is first activated by ATP to form Ala-AMP and then transferred to the acceptor end of tRNA(Ala). Also edits incorrectly charged Ser-tRNA(Ala) and Gly-tRNA(Ala) via its editing domain. This chain is Alanine--tRNA ligase, found in Rickettsia bellii (strain RML369-C).